The following is a 131-amino-acid chain: Small ribosomal subunit protein uS11 (131 aa).

This sequence belongs to the universal ribosomal protein uS11 family. In terms of assembly, part of the 30S ribosomal subunit. Interacts with proteins S7 and S18. Binds to IF-3.

Functionally, located on the platform of the 30S subunit, it bridges several disparate RNA helices of the 16S rRNA. Forms part of the Shine-Dalgarno cleft in the 70S ribosome. The protein is Small ribosomal subunit protein uS11 of Wolinella succinogenes (strain ATCC 29543 / DSM 1740 / CCUG 13145 / JCM 31913 / LMG 7466 / NCTC 11488 / FDC 602W) (Vibrio succinogenes).